A 706-amino-acid polypeptide reads, in one-letter code: DNA ligase (706 aa).

Residues 47-51 (DSEYD), 96-97 (SI), and Glu-133 each bind NAD(+). The active-site N6-AMP-lysine intermediate is the Lys-135. Positions 156, 192, 323, and 347 each coordinate NAD(+). The Zn(2+) site is built by Cys-441, Cys-444, Cys-459, and Cys-465. In terms of domain architecture, BRCT spans 624–706 (VAPKPLSGKT…MRLLASAEAE (83 aa)).

The protein belongs to the NAD-dependent DNA ligase family. LigA subfamily. It depends on Mg(2+) as a cofactor. Mn(2+) is required as a cofactor.

The catalysed reaction is NAD(+) + (deoxyribonucleotide)n-3'-hydroxyl + 5'-phospho-(deoxyribonucleotide)m = (deoxyribonucleotide)n+m + AMP + beta-nicotinamide D-nucleotide.. Functionally, DNA ligase that catalyzes the formation of phosphodiester linkages between 5'-phosphoryl and 3'-hydroxyl groups in double-stranded DNA using NAD as a coenzyme and as the energy source for the reaction. It is essential for DNA replication and repair of damaged DNA. This Polaromonas sp. (strain JS666 / ATCC BAA-500) protein is DNA ligase.